Reading from the N-terminus, the 392-residue chain is Copper-containing nitrite reductase (392 aa).

The first 18 residues, 1 to 18 (MKRQALAAMIASLFALAA), serve as a signal peptide directing secretion. C19 carries the N-palmitoyl cysteine lipid modification. C19 is lipidated: S-diacylglycerol cysteine. Residues 30–49 (ETPAASAEAASSAAQATAET) form a disordered region. Plastocyanin-like domains follow at residues 101–195 (WTFD…ILVE) and 245–346 (GHVG…LKVE). Cu cation contacts are provided by H134, H139, H174, C175, H183, and M188. Residue H139 coordinates substrate. H280 is a substrate binding site. Residue H329 coordinates Cu cation. The tract at residues 367-392 (GAASAPAASAPAASAPAASASEKSVY) is disordered. 4 consecutive repeat copies span residues 368–372 (AASAP), 373–377 (AASAP), 378–382 (AASAP), and 383–387 (AASAS). The interval 368–387 (AASAPAASAPAASAPAASAS) is 4 X 5 AA tandem repeats of A-A-S-A-P.

The protein belongs to the multicopper oxidase family. As to quaternary structure, homotrimer. Requires Cu(+) as cofactor. The cofactor is Cu(2+). Post-translationally, palmitoylated.

It localises to the cell outer membrane. The enzyme catalyses nitric oxide + Fe(III)-[cytochrome c] + H2O = Fe(II)-[cytochrome c] + nitrite + 2 H(+). Functionally, catalyzes the reduction of nitrite to nitric oxide (NO), probably with azurin as electron donor. Essential for growth and survival in oxygen-depleted environments. Can also provide protection against killing by normal human sera. The protein is Copper-containing nitrite reductase (aniA) of Neisseria gonorrhoeae.